A 102-amino-acid polypeptide reads, in one-letter code: Small ribosomal subunit protein uS10 (102 aa).

Belongs to the universal ribosomal protein uS10 family. As to quaternary structure, part of the 30S ribosomal subunit.

In terms of biological role, involved in the binding of tRNA to the ribosomes. This chain is Small ribosomal subunit protein uS10, found in Mycoplasma mycoides subsp. mycoides SC (strain CCUG 32753 / NCTC 10114 / PG1).